An 87-amino-acid polypeptide reads, in one-letter code: Small ribosomal subunit protein uS17 (87 aa).

Belongs to the universal ribosomal protein uS17 family. In terms of assembly, part of the 30S ribosomal subunit.

One of the primary rRNA binding proteins, it binds specifically to the 5'-end of 16S ribosomal RNA. The sequence is that of Small ribosomal subunit protein uS17 from Aster yellows witches'-broom phytoplasma (strain AYWB).